Here is a 123-residue protein sequence, read N- to C-terminus: NADH-quinone oxidoreductase subunit A (123 aa).

The next 3 membrane-spanning stretches (helical) occupy residues L6–I26, V66–V86, and W93–I113.

The protein belongs to the complex I subunit 3 family. In terms of assembly, NDH-1 is composed of 14 different subunits. Subunits NuoA, H, J, K, L, M, N constitute the membrane sector of the complex.

Its subcellular location is the cell inner membrane. The catalysed reaction is a quinone + NADH + 5 H(+)(in) = a quinol + NAD(+) + 4 H(+)(out). Functionally, NDH-1 shuttles electrons from NADH, via FMN and iron-sulfur (Fe-S) centers, to quinones in the respiratory chain. The immediate electron acceptor for the enzyme in this species is believed to be ubiquinone. Couples the redox reaction to proton translocation (for every two electrons transferred, four hydrogen ions are translocated across the cytoplasmic membrane), and thus conserves the redox energy in a proton gradient. In Myxococcus xanthus (strain DK1622), this protein is NADH-quinone oxidoreductase subunit A.